Reading from the N-terminus, the 198-residue chain is Nucleoid occlusion factor SlmA (198 aa).

Residues 10–70 form the HTH tetR-type domain; that stretch reads NRREEILQSL…SLIEFIEDSL (61 aa). The H-T-H motif DNA-binding region spans 33–52; the sequence is TTAKLAASVGVSEAALYRHF. The stretch at 117-144 forms a coiled coil; the sequence is EQDRLQGRINQLFERIEAQLRQVLREKR.

Belongs to the nucleoid occlusion factor SlmA family. In terms of assembly, homodimer. Interacts with FtsZ.

It localises to the cytoplasm. The protein localises to the nucleoid. Required for nucleoid occlusion (NO) phenomenon, which prevents Z-ring formation and cell division over the nucleoid. Acts as a DNA-associated cell division inhibitor that binds simultaneously chromosomal DNA and FtsZ, and disrupts the assembly of FtsZ polymers. SlmA-DNA-binding sequences (SBS) are dispersed on non-Ter regions of the chromosome, preventing FtsZ polymerization at these regions. In Escherichia coli (strain 55989 / EAEC), this protein is Nucleoid occlusion factor SlmA.